A 273-amino-acid chain; its full sequence is DNA repair protein RecO (273 aa).

The protein belongs to the RecO family.

Involved in DNA repair and RecF pathway recombination. This Saccharopolyspora erythraea (strain ATCC 11635 / DSM 40517 / JCM 4748 / NBRC 13426 / NCIMB 8594 / NRRL 2338) protein is DNA repair protein RecO.